The following is a 289-amino-acid chain: tRNA U34 carboxymethyltransferase (289 aa).

Carboxy-S-adenosyl-L-methionine contacts are provided by residues Lys60, Trp74, Lys79, Gly98, 120-122 (DPS), 147-148 (VE), Tyr167, and Arg282.

It belongs to the class I-like SAM-binding methyltransferase superfamily. CmoB family. In terms of assembly, homotetramer.

It catalyses the reaction carboxy-S-adenosyl-L-methionine + 5-hydroxyuridine(34) in tRNA = 5-carboxymethoxyuridine(34) in tRNA + S-adenosyl-L-homocysteine + H(+). In terms of biological role, catalyzes carboxymethyl transfer from carboxy-S-adenosyl-L-methionine (Cx-SAM) to 5-hydroxyuridine (ho5U) to form 5-carboxymethoxyuridine (cmo5U) at position 34 in tRNAs. The sequence is that of tRNA U34 carboxymethyltransferase from Campylobacter concisus (strain 13826).